Consider the following 212-residue polypeptide: Peptide methionine sulfoxide reductase MsrA (212 aa).

Cysteine 51 is a catalytic residue.

It belongs to the MsrA Met sulfoxide reductase family.

It catalyses the reaction L-methionyl-[protein] + [thioredoxin]-disulfide + H2O = L-methionyl-(S)-S-oxide-[protein] + [thioredoxin]-dithiol. The enzyme catalyses [thioredoxin]-disulfide + L-methionine + H2O = L-methionine (S)-S-oxide + [thioredoxin]-dithiol. Functionally, has an important function as a repair enzyme for proteins that have been inactivated by oxidation. Catalyzes the reversible oxidation-reduction of methionine sulfoxide in proteins to methionine. This Vibrio parahaemolyticus serotype O3:K6 (strain RIMD 2210633) protein is Peptide methionine sulfoxide reductase MsrA.